A 677-amino-acid polypeptide reads, in one-letter code: Protein hook (677 aa).

The 118-residue stretch at 6 to 123 (NEMYYSLLEW…RLLQLVLGCA (118 aa)) folds into the Calponin-homology (CH) domain. 2 coiled-coil regions span residues 135 to 436 (EIMC…KCGH) and 478 to 588 (QTAL…AKEV).

Belongs to the hook family. Homodimer. Interacts with microtubules via its N-terminus.

Its subcellular location is the cytoplasm. The protein localises to the cytoskeleton. It localises to the endosome. The protein resides in the synapse. Its function is as follows. Involved in endocytic trafficking by stabilizing organelles of the endocytic pathway. Probably acts as a cytoskeletal linker protein required to tether endosome vesicles to the cytoskeleton. Involved in modulation of endocytosis at stages required for down-regulation of membrane proteins that control synapse size. Not involved in synaptic vesicle recycling. Required in R7 cells for boss endocytosis into multivesicular bodies (MVBs). Has a role in regulating adult longevity. In Drosophila pseudoobscura pseudoobscura (Fruit fly), this protein is Protein hook.